The primary structure comprises 306 residues: Glutathione transport system permease protein GsiC (306 aa).

The Cytoplasmic portion of the chain corresponds to 1-8; it reads MLNYVIKR. A helical membrane pass occupies residues 9–29; the sequence is LLGLIPTLFIVSVLVFLFVHM. At 30–102 the chain is on the periplasmic side; sequence LPGDPARLIA…SRFMPTLWLT (73 aa). The 198-residue stretch at 95 to 292 folds into the ABC transmembrane type-1 domain; the sequence is FMPTLWLTIT…LEFILINLVV (198 aa). A helical transmembrane segment spans residues 103 to 123; the sequence is ITSMVWAVIFGMAAGIIAAVW. Residues 124–134 are Cytoplasmic-facing; the sequence is RNRWPDRLSMT. A helical membrane pass occupies residues 135–155; sequence IAVSGISFPAFALGMLLIQVF. The Periplasmic portion of the chain corresponds to 156–168; the sequence is SVELGWLPTVGAD. Residues 169-189 form a helical membrane-spanning segment; the sequence is SWQHYILSSLTLGAAVAAVMA. Topologically, residues 190 to 228 are cytoplasmic; the sequence is RFTRASFVDVLSEDYMRTARAKGVSETWVVLKHGLRNAM. Residues 229-249 form a helical membrane-spanning segment; that stretch reads IPVVTMMGLQFGFLLGGSIVV. Topologically, residues 250–277 are periplasmic; the sequence is EKVFNWPGLGRLLVDSVEMRDYPVIQAE. Residues 278–298 traverse the membrane as a helical segment; it reads ILLFSLEFILINLVVDVLYAA. The Cytoplasmic portion of the chain corresponds to 299-306; sequence INPAIRYK.

This sequence belongs to the binding-protein-dependent transport system permease family. In terms of assembly, the complex is composed of two ATP-binding proteins (GsiA), two transmembrane proteins (GsiC and GsiD) and a solute-binding protein (GsiB).

It localises to the cell inner membrane. Part of the ABC transporter complex GsiABCD involved in glutathione import. Probably responsible for the translocation of the substrate across the membrane. The chain is Glutathione transport system permease protein GsiC from Shigella boydii serotype 4 (strain Sb227).